The chain runs to 651 residues: Acetyl-coenzyme A synthetase (651 aa).

CoA is bound by residues 189–192 (RGGK), Thr311, and Asn335. Residues 387–389 (GEP), 411–416 (DTWWQT), Asp500, and Arg515 contribute to the ATP site. Ser523 lines the CoA pocket. ATP is bound at residue Arg526. Positions 537, 539, and 542 each coordinate Mg(2+). Arg586 is a binding site for CoA. N6-acetyllysine is present on Lys611.

It belongs to the ATP-dependent AMP-binding enzyme family. The cofactor is Mg(2+). Post-translationally, acetylated. Deacetylation by the SIR2-homolog deacetylase activates the enzyme.

The catalysed reaction is acetate + ATP + CoA = acetyl-CoA + AMP + diphosphate. Functionally, catalyzes the conversion of acetate into acetyl-CoA (AcCoA), an essential intermediate at the junction of anabolic and catabolic pathways. AcsA undergoes a two-step reaction. In the first half reaction, AcsA combines acetate with ATP to form acetyl-adenylate (AcAMP) intermediate. In the second half reaction, it can then transfer the acetyl group from AcAMP to the sulfhydryl group of CoA, forming the product AcCoA. This is Acetyl-coenzyme A synthetase from Brucella abortus (strain S19).